Here is a 510-residue protein sequence, read N- to C-terminus: ATP synthase subunit alpha (510 aa).

169–176 (GDRQTGKT) contributes to the ATP binding site.

Belongs to the ATPase alpha/beta chains family. F-type ATPases have 2 components, CF(1) - the catalytic core - and CF(0) - the membrane proton channel. CF(1) has five subunits: alpha(3), beta(3), gamma(1), delta(1), epsilon(1). CF(0) has three main subunits: a(1), b(2) and c(9-12). The alpha and beta chains form an alternating ring which encloses part of the gamma chain. CF(1) is attached to CF(0) by a central stalk formed by the gamma and epsilon chains, while a peripheral stalk is formed by the delta and b chains.

It localises to the cell inner membrane. The enzyme catalyses ATP + H2O + 4 H(+)(in) = ADP + phosphate + 5 H(+)(out). In terms of biological role, produces ATP from ADP in the presence of a proton gradient across the membrane. The alpha chain is a regulatory subunit. This Anaeromyxobacter dehalogenans (strain 2CP-1 / ATCC BAA-258) protein is ATP synthase subunit alpha.